The following is a 279-amino-acid chain: HTH-type transcriptional regulator BhcR (279 aa).

A compositionally biased stretch (basic residues) spans 1–13 (MSVQIRKRGRPRG). A disordered region spans residues 1 to 21 (MSVQIRKRGRPRGRAGGLGAE). Positions 26-87 (IRALDRALDI…SQTQAWHVGP (62 aa)) constitute an HTH iclR-type domain. Residues 47 to 66 (LTEIAQRLDMAPSTVHRVLV) constitute a DNA-binding region (H-T-H motif). Residues 102–271 (LVERARPLLR…ARELSFGMAP (170 aa)) form the IclR-ED domain.

In terms of biological role, transcriptional regulator of the bhc gene cluster involved in glycolate and glyoxylate assimilation via the beta-hydroxyaspartate cycle (BHAC). Glyoxylate negatively affects the interaction of BhcR with the promoter region of the bhc gene cluster. In Paracoccus denitrificans (strain Pd 1222), this protein is HTH-type transcriptional regulator BhcR.